A 572-amino-acid polypeptide reads, in one-letter code: Urease subunit alpha (572 aa).

Residues 136–572 form the Urease domain; sequence GGIDTHIHWI…VPLAQRYFLF (437 aa). Residues His-141, His-143, and Lys-224 each coordinate Ni(2+). The residue at position 224 (Lys-224) is an N6-carboxylysine. His-226 is a substrate binding site. Ni(2+) contacts are provided by His-253 and His-279. The active-site Proton donor is His-327. Asp-367 provides a ligand contact to Ni(2+).

The protein belongs to the metallo-dependent hydrolases superfamily. Urease alpha subunit family. In terms of assembly, heterotrimer of UreA (gamma), UreB (beta) and UreC (alpha) subunits. Three heterotrimers associate to form the active enzyme. The cofactor is Ni cation. Carboxylation allows a single lysine to coordinate two nickel ions.

The protein resides in the cytoplasm. The enzyme catalyses urea + 2 H2O + H(+) = hydrogencarbonate + 2 NH4(+). It functions in the pathway nitrogen metabolism; urea degradation; CO(2) and NH(3) from urea (urease route): step 1/1. This Actinobacillus pleuropneumoniae (Haemophilus pleuropneumoniae) protein is Urease subunit alpha.